We begin with the raw amino-acid sequence, 1012 residues long: DNA polymerase catalytic subunit (1012 aa).

This sequence belongs to the DNA polymerase type-B family.

It localises to the host nucleus. It carries out the reaction DNA(n) + a 2'-deoxyribonucleoside 5'-triphosphate = DNA(n+1) + diphosphate. This Human herpesvirus 6A (strain Uganda-1102) (HHV-6 variant A) protein is DNA polymerase catalytic subunit (U38).